Here is a 111-residue protein sequence, read N- to C-terminus: Large ribosomal subunit protein uL24 (111 aa).

This sequence belongs to the universal ribosomal protein uL24 family. As to quaternary structure, part of the 50S ribosomal subunit.

Its function is as follows. One of two assembly initiator proteins, it binds directly to the 5'-end of the 23S rRNA, where it nucleates assembly of the 50S subunit. Functionally, one of the proteins that surrounds the polypeptide exit tunnel on the outside of the subunit. This is Large ribosomal subunit protein uL24 from Bifidobacterium longum (strain DJO10A).